We begin with the raw amino-acid sequence, 234 residues long: Multicopy suppressor of SEC21 protein 27 (234 aa).

Topologically, residues 1 to 47 are cytoplasmic; the sequence is MQTPLESTDVKLDTLNEPSAHLIEKNVALPKDIFRSYLSYWIYEIAR. The residue at position 3 (Thr-3) is a Phosphothreonine. A helical membrane pass occupies residues 48 to 68; it reads YTPVMILSLVIGVLVLLIIFF. Over 69–72 the chain is Extracellular; that stretch reads NDNE. Residues 73 to 93 form a helical membrane-spanning segment; it reads ACVFNSAYYAYLSLVVLLIIL. Over 94 to 234 the chain is Cytoplasmic; the sequence is GDGNPKLVSR…NIDALLKKTE (141 aa). Residues 231 to 234 are COPI binding; sequence KKTE.

Belongs to the DUP/COS family. Interacts with MST28. Binds to coatomer proteins of COPI and SEC23/SEC24 of COPII coated vesicles.

Its subcellular location is the endoplasmic reticulum. It is found in the golgi apparatus. The protein resides in the cytoplasmic vesicle. The protein localises to the COPI-coated vesicle membrane. It localises to the COPII-coated vesicle membrane. Its function is as follows. Involved in protein trafficking vesicle formation, probably by stabilizing of coatomer at the Golgi membrane and thus allowing the efficient formation of COPI coated vesicles. This is Multicopy suppressor of SEC21 protein 27 (MST27) from Saccharomyces cerevisiae (strain ATCC 204508 / S288c) (Baker's yeast).